The following is a 199-amino-acid chain: Holliday junction branch migration complex subunit RuvA (199 aa).

Residues 1–63 (MIDYIKGNLV…EDSQRLFGFT (63 aa)) form a domain I region. Residues 64–142 (TRTERLLFEK…DMAPMLEPAA (79 aa)) form a domain II region. The segment at 143–153 (GADKQQKNPQL) is flexible linker. The tract at residues 153–199 (LEDALEALRALGYVEKELKKVEKQLKAETLETDEYIRRALALMLKRP) is domain III.

The protein belongs to the RuvA family. As to quaternary structure, homotetramer. Forms an RuvA(8)-RuvB(12)-Holliday junction (HJ) complex. HJ DNA is sandwiched between 2 RuvA tetramers; dsDNA enters through RuvA and exits via RuvB. An RuvB hexamer assembles on each DNA strand where it exits the tetramer. Each RuvB hexamer is contacted by two RuvA subunits (via domain III) on 2 adjacent RuvB subunits; this complex drives branch migration. In the full resolvosome a probable DNA-RuvA(4)-RuvB(12)-RuvC(2) complex forms which resolves the HJ.

Its subcellular location is the cytoplasm. In terms of biological role, the RuvA-RuvB-RuvC complex processes Holliday junction (HJ) DNA during genetic recombination and DNA repair, while the RuvA-RuvB complex plays an important role in the rescue of blocked DNA replication forks via replication fork reversal (RFR). RuvA specifically binds to HJ cruciform DNA, conferring on it an open structure. The RuvB hexamer acts as an ATP-dependent pump, pulling dsDNA into and through the RuvAB complex. HJ branch migration allows RuvC to scan DNA until it finds its consensus sequence, where it cleaves and resolves the cruciform DNA. The protein is Holliday junction branch migration complex subunit RuvA of Shouchella clausii (strain KSM-K16) (Alkalihalobacillus clausii).